Here is a 653-residue protein sequence, read N- to C-terminus: Large subunit GTPase 1 homolog (653 aa).

The segment at 1–31 (MGRRRAPAGGSLGRALMRHQTQRSRSHRHTD) is disordered. A compositionally biased stretch (basic residues) spans 16 to 28 (LMRHQTQRSRSHR). A phosphoserine mark is found at serine 93 and serine 97. One can recognise a CP-type G domain in the interval 164 to 445 (WRQLWRVIER…LCDCPGLVMP (282 aa)). 212-215 (NKAD) serves as a coordination point for GTP. The tract at residues 251 to 358 (DSEEEANKDD…RKTPQKRQLH (108 aa)) is disordered. Serine 252 is modified (phosphoserine). Residues 258–288 (KDDRQSNTAEFEHSSFDEAEISHSETEHLPA) show a composition bias toward basic and acidic residues. The span at 299 to 333 (TTDEDDSEYEDCPEEEEDDWQTCSEEDGPEEEDCG) shows a compositional bias: acidic residues. Residues 394-401 (GYPNVGKS) and 438-441 (DCPG) contribute to the GTP site. Residues 630-653 (SENGAGKPWKKHGNRNKKEKSCRL) form a disordered region. Basic residues predominate over residues 637 to 647 (PWKKHGNRNKK).

The protein belongs to the TRAFAC class YlqF/YawG GTPase family. LSG1 subfamily.

The protein localises to the cytoplasm. The protein resides in the endoplasmic reticulum. Its subcellular location is the nucleus. It localises to the cajal body. The enzyme catalyses GTP + H2O = GDP + phosphate + H(+). Functionally, functions as a GTPase. May act by mediating the release of NMD3 from the 60S ribosomal subunit after export into the cytoplasm during the 60S ribosomal subunit maturation. This chain is Large subunit GTPase 1 homolog, found in Macaca fascicularis (Crab-eating macaque).